A 75-amino-acid chain; its full sequence is Putative membrane protein insertion efficiency factor (75 aa).

This sequence belongs to the UPF0161 family.

It is found in the cell membrane. Its function is as follows. Could be involved in insertion of integral membrane proteins into the membrane. This Halalkalibacterium halodurans (strain ATCC BAA-125 / DSM 18197 / FERM 7344 / JCM 9153 / C-125) (Bacillus halodurans) protein is Putative membrane protein insertion efficiency factor.